A 563-amino-acid polypeptide reads, in one-letter code: BOS complex subunit NCLN (563 aa).

The N-terminal stretch at 1 to 42 (MLEEAGEVLENMLKASCLPLGFIVFLPAVLLLVAPPLPAADA) is a signal peptide. At 43–522 (AHEFTVYRMQ…VMNAYRVKPA (480 aa)) the chain is on the lumenal side. 2 N-linked (GlcNAc...) asparagine glycosylation sites follow: Asn-241 and Asn-428. The chain crosses the membrane as a helical span at residues 523–543 (IFDLLLAVCIGAYLGMAYTAV). Topologically, residues 544–563 (QHFDLLYKTVQRLLVKAKTQ) are cytoplasmic.

The protein belongs to the nicastrin family. Component of the back of Sec61 (BOS) complex, composed of NCLN/Nicalin, NOMO1 and TMEM147. The BOS complex is part of the multi-pass translocon (MPT) complex, composed of three subcomplexes, the GEL complex (composed of RAB5IF/OPTI and TMCO1), the BOS complex (composed of NCLN/Nicalin, NOMO1 and TMEM147) and the PAT complex (composed of WDR83OS/Asterix and CCDC47). The MPT complex associates with the SEC61 complex.

The protein resides in the endoplasmic reticulum membrane. In terms of biological role, component of the multi-pass translocon (MPT) complex that mediates insertion of multi-pass membrane proteins into the lipid bilayer of membranes. The MPT complex takes over after the SEC61 complex: following membrane insertion of the first few transmembrane segments of proteins by the SEC61 complex, the MPT complex occludes the lateral gate of the SEC61 complex to promote insertion of subsequent transmembrane regions. May antagonize Nodal signaling and subsequent organization of axial structures during mesodermal patterning, via its interaction with NOMO. This Canis lupus familiaris (Dog) protein is BOS complex subunit NCLN.